Consider the following 92-residue polypeptide: Small ribosomal subunit protein uS19 (92 aa).

This sequence belongs to the universal ribosomal protein uS19 family.

Functionally, protein S19 forms a complex with S13 that binds strongly to the 16S ribosomal RNA. This chain is Small ribosomal subunit protein uS19, found in Polaromonas sp. (strain JS666 / ATCC BAA-500).